A 1061-amino-acid polypeptide reads, in one-letter code: Transcription termination factor 2 (1061 aa).

Disordered regions lie at residues 1-163 and 212-253; these read MSSE…TAEA and ILSS…VKTS. Residues 32 to 46 show a composition bias toward low complexity; sequence LSKSSRLSKSSRPSS. Phosphoserine occurs at positions 108 and 110. Residues 138–152 show a composition bias toward acidic residues; the sequence is LSDDDSEIEYSDEVQ. Phosphoserine is present on residues Ser214 and Ser215. Thr216 bears the Phosphothreonine mark. Over residues 237–253 the composition is skewed to polar residues; sequence KSLSPRSSAGASVVKTS. The Helicase ATP-binding domain occupies 452-652; sequence WRERKLPRGG…YALLKFLRCS (201 aa). 465-472 contributes to the ATP binding site; it reads DDMGLGKT. A disordered region spans residues 485–523; sequence GQEMSEGKDESSDSDSEDDKNKKRKSVTGWKSKGRKDTR. Residues 506–522 are compositionally biased toward basic residues; the sequence is KKRKSVTGWKSKGRKDT. The DEAH box motif lies at 603–606; that stretch reads DEAH. A Helicase C-terminal domain is found at 891–1056; sequence KINMVIQILK…SSKLTIDDLK (166 aa).

The protein belongs to the SNF2/RAD54 helicase family.

It is found in the nucleus. In terms of biological role, dsDNA-dependent ATPase which acts as a transcription termination factor by coupling ATP hydrolysis with removal of RNA polymerase II from the DNA template. The chain is Transcription termination factor 2 (lds) from Drosophila melanogaster (Fruit fly).